A 589-amino-acid polypeptide reads, in one-letter code: MHSEEKYLHIPNNTKYPEIIVEEEEEDPSEEERSELSETDDVATPLRPSDTFPFKRRNSPCSIKMSEEHLKRLREIACPSPTPTQCSTVSKHEFQNWRINEDVMKDMMHIGTICERENVCKTSKYVYTATMASYTVTEWKLKEGNTPDEIEKISRTIEDLCQLRHKRLAPMYGYHWRLETELMVFRAHVPSGTVADLVKVSAIPQETAVRYIVHVIDALAYLHERKHVHGKLNASNLLLTISNDILLADPFIEGLPSAQKRRALLASPPEAFRSLESYPCLTPSSDIWSVGCVLVTMLTRYPPFLEHYMHFHGESLHRELVSEWCTRRQLIYSSQTLIPSASKEICELIDQIFNVDPENRPSAQNLLESHGSKSRKASLRNSLASLTTAKEPDPPKPIDDFYVEREDDEEHRKIEELRELAERGNNEGGFIPFIRWYMSRILIFSVLLVKWIGMVLCAALSLAAVAGGVFFAIFLIYNGIQIACQCSLNEGFVVLIALILLPIIILLTTLCCNNSLDRYHADVESGKVEKSRFVMKTPEKDVIVGGYILVEGSPDHDKPAEVPRKLGISEGLQSTMGNTFLGYGVDKIA.

The interval 1–51 (MHSEEKYLHIPNNTKYPEIIVEEEEEDPSEEERSELSETDDVATPLRPSDT) is disordered. A compositionally biased stretch (acidic residues) spans 20 to 41 (IVEEEEEDPSEEERSELSETDD). Positions 97 to 373 (WRINEDVMKD…QNLLESHGSK (277 aa)) constitute a Protein kinase domain. 3 helical membrane passes run 429-449 (GFIP…VLLV), 456-476 (LCAA…IFLI), and 491-511 (GFVV…TTLC).

This sequence belongs to the protein kinase superfamily. STE Ser/Thr protein kinase family. Expressed in vulval and body wall muscles, hypodermis, seam cells and tissues next to pharynx and anus.

Its subcellular location is the membrane. In terms of biological role, negatively regulates lifespan and health span probably by participating in nutrient sensing. The protein is Protein drl-1 of Caenorhabditis elegans.